The primary structure comprises 212 residues: Probable nicotinate-nucleotide adenylyltransferase (212 aa).

This sequence belongs to the NadD family.

The catalysed reaction is nicotinate beta-D-ribonucleotide + ATP + H(+) = deamido-NAD(+) + diphosphate. The protein operates within cofactor biosynthesis; NAD(+) biosynthesis; deamido-NAD(+) from nicotinate D-ribonucleotide: step 1/1. Catalyzes the reversible adenylation of nicotinate mononucleotide (NaMN) to nicotinic acid adenine dinucleotide (NaAD). The polypeptide is Probable nicotinate-nucleotide adenylyltransferase (Saccharopolyspora erythraea (strain ATCC 11635 / DSM 40517 / JCM 4748 / NBRC 13426 / NCIMB 8594 / NRRL 2338)).